The following is a 407-amino-acid chain: Large ribosomal subunit protein uL3-like (407 aa).

A compositionally biased stretch (basic residues) spans 1–31 (MSHRKFSAPRHGHLGFLPHKRSRRHRGKVKS). A disordered region spans residues 1–37 (MSHRKFSAPRHGHLGFLPHKRSRRHRGKVKSWPRDDP).

The protein belongs to the universal ribosomal protein uL3 family. As to quaternary structure, component of the large ribosomal subunit (LSU). Part of a LSU subcomplex, the 5S RNP which is composed of the 5S RNA, RPL5 and RPL11. Interacts with NVL in an ATP-dependent manner. Interacts with RRP1B. Interacts with IPO5, IPO7 and KPNB1; these interactions may be involved in RPL5 nuclear import for the assembly of ribosomal subunits. Interacts with RRP1B. Expression is restricted to striated muscles.

Heart- and skeletal muscle-specific component of the ribosome, which regulates muscle function. Component of the large ribosomal subunit in striated muscle cells: replaces the RPL3 paralog in the ribosome in these cells. The ribosome is a large ribonucleoprotein complex responsible for the synthesis of proteins in the cell. Inhibits myotube growth and muscle function. This is Large ribosomal subunit protein uL3-like from Mus musculus (Mouse).